Here is a 344-residue protein sequence, read N- to C-terminus: Dihydroorotase (344 aa).

Residues His14 and His16 each coordinate Zn(2+). Residues 16-18 and Asn42 contribute to the substrate site; that span reads HLR. Zn(2+) contacts are provided by Lys100, His137, and His175. Lys100 carries the post-translational modification N6-carboxylysine. His137 contacts substrate. Leu220 contacts substrate. Residue Asp248 coordinates Zn(2+). Residue Asp248 is part of the active site. His252 and Ala264 together coordinate substrate.

The protein belongs to the metallo-dependent hydrolases superfamily. DHOase family. Class II DHOase subfamily. In terms of assembly, homodimer. The cofactor is Zn(2+).

It catalyses the reaction (S)-dihydroorotate + H2O = N-carbamoyl-L-aspartate + H(+). The protein operates within pyrimidine metabolism; UMP biosynthesis via de novo pathway; (S)-dihydroorotate from bicarbonate: step 3/3. Catalyzes the reversible cyclization of carbamoyl aspartate to dihydroorotate. The sequence is that of Dihydroorotase from Roseobacter denitrificans (strain ATCC 33942 / OCh 114) (Erythrobacter sp. (strain OCh 114)).